The chain runs to 326 residues: Endochitinase (326 aa).

The first 25 residues, 1-25 (MVYCTASLPLLLLLLVGLLAGEAFA), serve as a signal peptide directing secretion. Residues 26-66 (EQCGRQAGGALCPGGLCCSQFGWCGSTSDYCGPTCQSQCGG) enclose the Chitin-binding type-1 domain. Cystine bridges form between C28–C43, C37–C49, C42–C56, C60–C64, C96–C158, C170–C178, and C277–C309. The active-site Proton donor is E140.

Belongs to the glycosyl hydrolase 19 family. Chitinase class I subfamily. As to expression, expressed in the pulp of the fruit (at protein level). Expressed in mesocarp (at protein level).

It catalyses the reaction Random endo-hydrolysis of N-acetyl-beta-D-glucosaminide (1-&gt;4)-beta-linkages in chitin and chitodextrins.. Defense against chitin-containing fungal pathogens. Has in vitro antifungal activity against F.oxysporum inhibiting its growth and the branching of its hyphae. Has endochitinase activity, but no exochitinase or lysozyme activities. The protein is Endochitinase of Persea americana (Avocado).